The chain runs to 510 residues: Holliday junction branch migration ATPase PINA (510 aa).

As to quaternary structure, homohexamer. Interacts with Holliday junction resolvase Hjc, interacts with helicase Hjm (Hel308).

The catalysed reaction is ATP + H2O = ADP + phosphate + H(+). Important for growth at low temperatures (less than 65 degrees Celsius in this organism). Promotes Holliday junction (HJ) branch migration and unwinds Y-shaped DNA (but not replication forks or dsDNA) in an ATP hydrolysis-dependent manner. Stimulates cleavage by HJ resolvase Hjc. Hjc, Hjm (Hel308) and PINA coordinate HJ migration and cleavage of replication forks in a coordinated way. Probably acts as an ATP-dependent pump that pulls DNA through the hexamer. The sequence is that of Holliday junction branch migration ATPase PINA from Sulfolobus acidocaldarius (strain ATCC 33909 / DSM 639 / JCM 8929 / NBRC 15157 / NCIMB 11770).